A 688-amino-acid polypeptide reads, in one-letter code: Coiled-coil domain-containing protein 157 (688 aa).

Polar residues predominate over residues 143-153; that stretch reads ANQGETLTSKP. Disordered regions lie at residues 143–162, 168–189, 322–341, 366–385, and 592–688; these read ANQG…PAGS, AQLV…ERDS, QAAR…QWER, QQRE…QAEA, and QGAE…ERPT. Residues 288–572 adopt a coiled-coil conformation; the sequence is KLVGLLRAQL…LSKIREVAQQ (285 aa). The segment covering 369-382 has biased composition (polar residues); that stretch reads ESTQAVESKAQQLQ. Residues 671-680 show a composition bias toward low complexity; that stretch reads SPSSGRASPA.

The sequence is that of Coiled-coil domain-containing protein 157 (CCDC157) from Bos taurus (Bovine).